The following is a 901-amino-acid chain: ABC transporter A family member 8 (901 aa).

7 helical membrane passes run 34-54 (LITI…LFDT), 315-335 (IASL…FPVI), 369-389 (FLLI…LIGL), 402-422 (VFFF…SAMF), 427-447 (TATV…IFLF), 460-477 (WIIA…RGLY), and 508-528 (CIML…DQII). The ABC transporter domain maps to 586–823 (VLCNNLKKVY…YGGSYVLTVT (238 aa)). Residue 624-631 (GPNGAGKT) coordinates ATP.

This sequence belongs to the ABC transporter superfamily. ABCA family. CPR flippase (TC 3.A.1.211) subfamily.

The protein localises to the membrane. The sequence is that of ABC transporter A family member 8 (ABCA8) from Arabidopsis thaliana (Mouse-ear cress).